The chain runs to 171 residues: MIFDSLTMTQSSLSLLLLTGAIFSISALYLTLFHRCATFSATSDLFLLVPLKFVSRDINDRLKTHYHHSCLGSPFLCIIFLFISPLLNYHFRSLVRPPKIHQKGSIPTLTKNAETRCSHHLKQAAATGEVCKVVVIIKGHILKDCSIFFFIIFPLIYPLFINCSSKYNGLQ.

Positions 1 to 24 are cleaved as a signal peptide; the sequence is MIFDSLTMTQSSLSLLLLTGAIFS. Over 25–70 the chain is Extracellular; that stretch reads ISALYLTLFHRCATFSATSDLFLLVPLKFVSRDINDRLKTHYHHSC. A helical transmembrane segment spans residues 71 to 91; the sequence is LGSPFLCIIFLFISPLLNYHF. Over 92–140 the chain is Cytoplasmic; that stretch reads RSLVRPPKIHQKGSIPTLTKNAETRCSHHLKQAAATGEVCKVVVIIKGH. The helical transmembrane segment at 141–161 threads the bilayer; that stretch reads ILKDCSIFFFIIFPLIYPLFI. Residues 162–171 lie on the Extracellular side of the membrane; that stretch reads NCSSKYNGLQ.

The protein localises to the membrane. This is an uncharacterized protein from Saccharomyces cerevisiae (strain ATCC 204508 / S288c) (Baker's yeast).